Here is a 279-residue protein sequence, read N- to C-terminus: Ribosomal RNA small subunit methyltransferase A (279 aa).

6 residues coordinate S-adenosyl-L-methionine: Asn27, Leu29, Gly54, Glu76, Asp102, and Asn127.

The protein belongs to the class I-like SAM-binding methyltransferase superfamily. rRNA adenine N(6)-methyltransferase family. RsmA subfamily.

Its subcellular location is the cytoplasm. The catalysed reaction is adenosine(1518)/adenosine(1519) in 16S rRNA + 4 S-adenosyl-L-methionine = N(6)-dimethyladenosine(1518)/N(6)-dimethyladenosine(1519) in 16S rRNA + 4 S-adenosyl-L-homocysteine + 4 H(+). In terms of biological role, specifically dimethylates two adjacent adenosines (A1518 and A1519) in the loop of a conserved hairpin near the 3'-end of 16S rRNA in the 30S particle. May play a critical role in biogenesis of 30S subunits. This Mesorhizobium japonicum (strain LMG 29417 / CECT 9101 / MAFF 303099) (Mesorhizobium loti (strain MAFF 303099)) protein is Ribosomal RNA small subunit methyltransferase A.